The following is a 663-amino-acid chain: LEAF RUST 10 DISEASE-RESISTANCE LOCUS RECEPTOR-LIKE PROTEIN KINASE-like 1.4 (663 aa).

The N-terminal stretch at 1–25 is a signal peptide; the sequence is MYYPLSSSLMFFILFSLFYHLPCES. Residues 26 to 241 lie on the Extracellular side of the membrane; that stretch reads SKCESLFQCG…TSLSIGAKAG (216 aa). N-linked (GlcNAc...) asparagine glycans are attached at residues asparagine 36, asparagine 64, asparagine 106, asparagine 137, and asparagine 208. Residues 242–262 form a helical membrane-spanning segment; the sequence is IAVASVSGLAILLLAGLFLCI. Residues 263–663 are Cytoplasmic-facing; the sequence is RRRRKTQDAQ…TSSSDTAASL (401 aa). The segment at 282–304 is disordered; sequence SYSSRDTSRNPTSTTISSSSNHS. A compositionally biased stretch (low complexity) spans 290–304; it reads RNPTSTTISSSSNHS. The region spanning 334 to 609 is the Protein kinase domain; sequence ENFSRELGDG…DEIVEILRGI (276 aa). Residues 340–348 and lysine 362 contribute to the ATP site; that span reads LGDGGFGTV. Aspartate 458 (proton acceptor) is an active-site residue. The tract at residues 637-663 is disordered; sequence LLRNSVPPPISPETDKWTSSSDTAASL. Residues 653–663 are compositionally biased toward polar residues; the sequence is WTSSSDTAASL.

The protein belongs to the protein kinase superfamily. Ser/Thr protein kinase family.

Its subcellular location is the cell membrane. The enzyme catalyses L-seryl-[protein] + ATP = O-phospho-L-seryl-[protein] + ADP + H(+). It carries out the reaction L-threonyl-[protein] + ATP = O-phospho-L-threonyl-[protein] + ADP + H(+). This Arabidopsis thaliana (Mouse-ear cress) protein is LEAF RUST 10 DISEASE-RESISTANCE LOCUS RECEPTOR-LIKE PROTEIN KINASE-like 1.4.